A 274-amino-acid chain; its full sequence is Putative phosphoenolpyruvate synthase regulatory protein (274 aa).

Residue 154–161 (GVSRCGKT) coordinates ADP.

Belongs to the pyruvate, phosphate/water dikinase regulatory protein family. PSRP subfamily.

It carries out the reaction [pyruvate, water dikinase] + ADP = [pyruvate, water dikinase]-phosphate + AMP + H(+). The catalysed reaction is [pyruvate, water dikinase]-phosphate + phosphate + H(+) = [pyruvate, water dikinase] + diphosphate. Bifunctional serine/threonine kinase and phosphorylase involved in the regulation of the phosphoenolpyruvate synthase (PEPS) by catalyzing its phosphorylation/dephosphorylation. In Pseudomonas aeruginosa (strain LESB58), this protein is Putative phosphoenolpyruvate synthase regulatory protein.